The primary structure comprises 407 residues: Arginine deiminase (407 aa).

The active-site Amidino-cysteine intermediate is C397.

Belongs to the arginine deiminase family.

The protein localises to the cytoplasm. The enzyme catalyses L-arginine + H2O = L-citrulline + NH4(+). It functions in the pathway amino-acid degradation; L-arginine degradation via ADI pathway; carbamoyl phosphate from L-arginine: step 1/2. The sequence is that of Arginine deiminase from Escherichia coli O81 (strain ED1a).